The following is a 273-amino-acid chain: Serine acetyltransferase (273 aa).

Belongs to the transferase hexapeptide repeat family. In terms of assembly, part of the cysteine synthase complex formed at a ratio of 1 copy of this protein and 2 copies of O-acetylserine sulfhydrylase (cysK). The complex reversibly dissociates in the presence of O-acetyl-L-serine in the absence of hydrogen sulfide.

It is found in the cytoplasm. The enzyme catalyses L-serine + acetyl-CoA = O-acetyl-L-serine + CoA. The protein operates within amino-acid biosynthesis; L-cysteine biosynthesis; L-cysteine from L-serine: step 1/2. Its activity is regulated as follows. Sensitive to feedback inhibition by L-cysteine. The protein is Serine acetyltransferase (cysE) of Salmonella typhimurium (strain LT2 / SGSC1412 / ATCC 700720).